Consider the following 81-residue polypeptide: Large ribosomal subunit protein bL31 (81 aa).

This sequence belongs to the bacterial ribosomal protein bL31 family. Type A subfamily. In terms of assembly, part of the 50S ribosomal subunit.

In terms of biological role, binds the 23S rRNA. This chain is Large ribosomal subunit protein bL31, found in Synechocystis sp. (strain ATCC 27184 / PCC 6803 / Kazusa).